A 485-amino-acid chain; its full sequence is NADH-quinone oxidoreductase subunit N (485 aa).

A run of 14 helical transmembrane segments spans residues 8–28 (LIALLPLLIVGLTVVVVMLSI), 35–55 (FLNATLSVIGLNAALVSLWFV), 71–91 (GFAMLYTGLVLLASLATCTFA), 105–125 (FYLLVLIAALGGILLANANHL), 127–147 (SLFLGIELISLPLFGLVGYAF), 159–179 (YTILSAAASSFLLFGMALVYA), 203–223 (LLAGFGMMIVGLGFKLSLVPF), 235–255 (PAPVSTFLATASKIAIFGVVM), 271–291 (VVLAIIAFASIIFGNLMALSQ), 297–317 (LLGYSSISHLGYLLVALIALQ), 326–346 (VGGYLAGYLFSSLGAFGVVSL), 373–393 (AAVMTVMMLSLAGIPMTLGFI), 408–430 (WWLVGAVVVGSAIGLYYYLRVAV), and 455–475 (IVVLISALLVLVLGVWPQPLI).

This sequence belongs to the complex I subunit 2 family. In terms of assembly, NDH-1 is composed of 13 different subunits. Subunits NuoA, H, J, K, L, M, N constitute the membrane sector of the complex.

The protein localises to the cell inner membrane. It catalyses the reaction a quinone + NADH + 5 H(+)(in) = a quinol + NAD(+) + 4 H(+)(out). Functionally, NDH-1 shuttles electrons from NADH, via FMN and iron-sulfur (Fe-S) centers, to quinones in the respiratory chain. The immediate electron acceptor for the enzyme in this species is believed to be ubiquinone. Couples the redox reaction to proton translocation (for every two electrons transferred, four hydrogen ions are translocated across the cytoplasmic membrane), and thus conserves the redox energy in a proton gradient. In Shigella boydii serotype 18 (strain CDC 3083-94 / BS512), this protein is NADH-quinone oxidoreductase subunit N.